We begin with the raw amino-acid sequence, 113 residues long: Iron-sulfur cluster insertion protein ErpA (113 aa).

The iron-sulfur cluster site is built by Cys-41, Cys-105, and Cys-107.

The protein belongs to the HesB/IscA family. As to quaternary structure, homodimer. Iron-sulfur cluster is required as a cofactor.

Functionally, required for insertion of 4Fe-4S clusters for at least IspG. This chain is Iron-sulfur cluster insertion protein ErpA, found in Vibrio vulnificus (strain CMCP6).